Consider the following 130-residue polypeptide: Ribonuclease VapC46 (130 aa).

The PINc domain maps to 4–118 (IYLDSSAIVK…CTYDDRMRDA (115 aa)). Residues Asp7 and Asp91 each contribute to the Mg(2+) site.

Belongs to the PINc/VapC protein family. Requires Mg(2+) as cofactor.

Toxic component of a type II toxin-antitoxin (TA) system. An RNase. Upon expression in M.smegmatis inhibits colony formation. Its toxic effect is neutralized by coexpression with cognate antitoxin VapB46. In Mycobacterium tuberculosis (strain ATCC 25618 / H37Rv), this protein is Ribonuclease VapC46.